Consider the following 350-residue polypeptide: tRNA uridine(34) hydroxylase (350 aa).

The region spanning 146–240 (DDPDAIFIDM…YARRAREQGL (95 aa)) is the Rhodanese domain. Cysteine 200 functions as the Cysteine persulfide intermediate in the catalytic mechanism. The interval 318-350 (QRRRRAGREKGNKIFNKSRGRLNSKLGIPDPTE) is disordered.

Belongs to the TrhO family.

The catalysed reaction is uridine(34) in tRNA + AH2 + O2 = 5-hydroxyuridine(34) in tRNA + A + H2O. In terms of biological role, catalyzes oxygen-dependent 5-hydroxyuridine (ho5U) modification at position 34 in tRNAs. The protein is tRNA uridine(34) hydroxylase of Salmonella arizonae (strain ATCC BAA-731 / CDC346-86 / RSK2980).